Reading from the N-terminus, the 1588-residue chain is Paternally-expressed gene 3 protein (1588 aa).

The 83-residue stretch at 46–128 (HQRFRNLIYV…TLLENYKEMY (83 aa)) folds into the SCAN box domain. 3 disordered regions span residues 128–230 (YQPE…ESYQ), 266–306 (DGHS…RRGI), and 319–349 (KFIKDVSRSSKSGRARESSDRSQRFPRMSDD). A compositionally biased stretch (acidic residues) spans 129 to 142 (QPEDDNNSDVTSDD). 4 stretches are compositionally biased toward basic and acidic residues: residues 143–152 (DMTRNRRESS), 161–182 (SGDRDWDRRGRSRDMEPRDRWS), 206–225 (FEMDRDDDRDSRAYESRSQD), and 295–306 (PEAKKSTHRRGI). 3 consecutive C2H2-type zinc fingers follow at residues 454–476 (YVCDECGRSFSVISEFVEHQIMH), 507–529 (FECKDCGETFNKSAALAEHRKIH), and 565–587 (YECRVCKETFLHSSALIEHQKIH). Residues 588–607 (FGDDKDNEREHERERERGET) show a composition bias toward basic and acidic residues. The segment at 588 to 610 (FGDDKDNEREHERERERGETFRP) is disordered. A C2H2-type 4 zinc finger spans residues 627 to 649 (YECKVCGETFLHSSSLKEHQKIH). The disordered stretch occupies residues 838 to 930 (LVASKPPRSH…EFSVPSSNVR (93 aa)). Over residues 868–881 (LNDKRQKIPARENP) the composition is skewed to basic and acidic residues. A C2H2-type 5 zinc finger spans residues 969–991 (YECQECGECFAHSSDLTEHQKIH). Positions 1056–1104 (EKSHGEESQGENTDGEETHSEETHGQETIEDPVIQGSDMEDPQKDDPDD) are disordered. Basic and acidic residues predominate over residues 1071–1082 (EETHSEETHGQE). 5 C2H2-type zinc fingers span residues 1107 to 1129 (YECEDCGLGFVDLTDLTDHQKVH), 1163 to 1185 (YECPKCGESFIHSSFLFEHQRIH), 1225 to 1247 (IRCLLCGQGFIHSSALNEHMRLH), 1282 to 1304 (FECAVCGESFINPAELADHVTVH), and 1332 to 1354 (YECKDCGKSFIHSTVLTKHKELH). The segment covering 1395–1415 (AEPEVEAAEPEVEAAEPEVEA) has biased composition (acidic residues). A disordered region spans residues 1395 to 1495 (AEPEVEAAEP…GIEDPEEGED (101 aa)). A run of 7 repeats spans residues 1397–1403 (PEVEAAE), 1404–1410 (PEVEAAE), 1411–1417 (PEVEAAE), 1418–1422 (PNGEA), 1425–1429 (PDGEA), 1432–1436 (PIGEA), and 1439–1443 (PNGEA). The tract at residues 1397 to 1417 (PEVEAAEPEVEAAEPEVEAAE) is 3 X 7 AA repeat of P-E-V-E-A-A-E. Residues 1418–1443 (PNGEAEGPDGEAAEPIGEAGQPNGEA) are 4 X 5 AA repeat of P-X-G-E-A. Acidic residues-rich tracts occupy residues 1449–1466 (DADEPDGAGIEDPEERAE) and 1475–1495 (PEGDADEPDGVGIEDPEEGED). 2 consecutive C2H2-type zinc fingers follow at residues 1505–1527 (YDCHECTETFTSSTAFGEHLKTH) and 1564–1586 (FKCDVCGQLFNDRLSLARHQNTH).

Belongs to the krueppel C2H2-type zinc-finger protein family. Homodimer. Interacts with SIAH1A and SIAH2. Interacts with TRAF2.

The protein localises to the nucleus. It localises to the cytoplasm. Functionally, induces apoptosis in cooperation with SIAH1A. Acts as a mediator between p53/TP53 and BAX in a neuronal death pathway that is activated by DNA damage. Acts synergistically with TRAF2 and inhibits TNF induced apoptosis through activation of NF-kappa-B. The protein is Paternally-expressed gene 3 protein (PEG3) of Pan troglodytes (Chimpanzee).